A 368-amino-acid chain; its full sequence is Phosphoserine aminotransferase (368 aa).

An L-glutamate-binding site is contributed by arginine 42. Residues tryptophan 101, threonine 151, aspartate 175, and glutamine 198 each coordinate pyridoxal 5'-phosphate. At lysine 199 the chain carries N6-(pyridoxal phosphate)lysine. A pyridoxal 5'-phosphate-binding site is contributed by 240-241 (NT).

This sequence belongs to the class-V pyridoxal-phosphate-dependent aminotransferase family. SerC subfamily. In terms of assembly, homodimer. Pyridoxal 5'-phosphate serves as cofactor.

The protein localises to the cytoplasm. The enzyme catalyses O-phospho-L-serine + 2-oxoglutarate = 3-phosphooxypyruvate + L-glutamate. It carries out the reaction 4-(phosphooxy)-L-threonine + 2-oxoglutarate = (R)-3-hydroxy-2-oxo-4-phosphooxybutanoate + L-glutamate. Its pathway is amino-acid biosynthesis; L-serine biosynthesis; L-serine from 3-phospho-D-glycerate: step 2/3. The protein operates within cofactor biosynthesis; pyridoxine 5'-phosphate biosynthesis; pyridoxine 5'-phosphate from D-erythrose 4-phosphate: step 3/5. Catalyzes the reversible conversion of 3-phosphohydroxypyruvate to phosphoserine and of 3-hydroxy-2-oxo-4-phosphonooxybutanoate to phosphohydroxythreonine. The sequence is that of Phosphoserine aminotransferase from Polaromonas sp. (strain JS666 / ATCC BAA-500).